A 128-amino-acid chain; its full sequence is Probable cystatin-15 (128 aa).

Positions 1–20 are cleaved as a signal peptide; the sequence is MFWKLPLLLGLLALGPHVCS. C82 and C92 form a disulfide bridge. N-linked (GlcNAc...) asparagine glycosylation is present at N104. C105 and C125 are disulfide-bonded.

This sequence belongs to the cystatin family.

The protein localises to the secreted. The polypeptide is Probable cystatin-15 (Bos taurus (Bovine)).